The sequence spans 260 residues: Acetylglutamate kinase (260 aa).

Residues 46 to 47 (GG), R68, and N160 contribute to the substrate site.

It belongs to the acetylglutamate kinase family. ArgB subfamily.

It is found in the cytoplasm. It catalyses the reaction N-acetyl-L-glutamate + ATP = N-acetyl-L-glutamyl 5-phosphate + ADP. It participates in amino-acid biosynthesis; L-arginine biosynthesis; N(2)-acetyl-L-ornithine from L-glutamate: step 2/4. Its function is as follows. Catalyzes the ATP-dependent phosphorylation of N-acetyl-L-glutamate. The sequence is that of Acetylglutamate kinase from Shewanella sp. (strain MR-7).